A 914-amino-acid polypeptide reads, in one-letter code: WAG22 antigen (914 aa).

The region spanning 1 to 93 (MSFVIAVPET…GGAYAAAEAA (93 aa)) is the PE domain. Disordered regions lie at residues 412-431 (GGSG…AGGA) and 895-914 (AGAG…HGLT). Residues 895-904 (AGAGGAGGLV) show a composition bias toward gly residues.

This sequence belongs to the mycobacterial PE family. PGRS subfamily.

In Mycobacterium bovis (strain ATCC BAA-935 / AF2122/97), this protein is WAG22 antigen (wag22).